The following is a 439-amino-acid chain: Probable aspartic-type endopeptidase AFUA_3G01220 (439 aa).

An N-terminal signal peptide occupies residues 1 to 20 (MHFSIGSLFLYLIASASCTA). Positions 31–50 (RTPFTTSTSKPSAFTNPSTD) are disordered. A compositionally biased stretch (low complexity) spans 32–45 (TPFTTSTSKPSAFT). The 342-residue stretch at 95-436 (FATSINIGNQ…DVGAAEMRFA (342 aa)) folds into the Peptidase A1 domain. An N-linked (GlcNAc...) asparagine glycan is attached at N103. Residue D111 is part of the active site. Residues N149, N178, N187, N253, N256, N276, and N308 are each glycosylated (N-linked (GlcNAc...) asparagine). The active site involves D323. N361 and N394 each carry an N-linked (GlcNAc...) asparagine glycan.

The protein belongs to the peptidase A1 family.

It localises to the secreted. In terms of biological role, probable aspartic-type endopeptidase which contributes to virulence. This Aspergillus fumigatus (strain ATCC MYA-4609 / CBS 101355 / FGSC A1100 / Af293) (Neosartorya fumigata) protein is Probable aspartic-type endopeptidase AFUA_3G01220.